Here is a 242-residue protein sequence, read N- to C-terminus: Megakaryocyte and platelet inhibitory receptor G6b (242 aa).

The first 17 residues, 1 to 17, serve as a signal peptide directing secretion; the sequence is MALVLPLLPLLLSKVQG. Asn-32 and Asn-112 each carry an N-linked (GlcNAc...) asparagine glycan. Residues 141–161 traverse the membrane as a helical segment; the sequence is VLIPLLGVGLVLGLGVAGVVW. 2 consecutive short sequence motifs (ITIM motif) follow at residues 210 to 215 and 236 to 241; these read LHYADL and TVYAVV. At Tyr-212 the chain carries Phosphotyrosine.

Interacts (via ITIM motif) with PTPN6 and PTPN11. Binds to heparin. In terms of processing, N-glycosylated. May be O-glycosylated. Post-translationally, phosphorylated. Expressed in mature megakaryocytes and platelets. Not expressed by immature megakaryocytes.

Its subcellular location is the cell membrane. Functionally, inhibitory receptor that acts as a critical regulator of hematopoietic lineage differentiation, megakaryocyte function and platelet production. Inhibits platelet aggregation and activation by agonists such as ADP and collagen-related peptide. This regulation of megakaryocate function as well as platelet production ann activation is done through the inhibition (via the 2 ITIM motifs) of the receptors CLEC1B and GP6:FcRgamma signaling. Appears to operate in a calcium-independent manner. The sequence is that of Megakaryocyte and platelet inhibitory receptor G6b from Mus musculus (Mouse).